The chain runs to 198 residues: Recombination protein RecR (198 aa).

The C4-type zinc finger occupies 57 to 72 (CSVCGHITDKDPCYIC). Residues 80–175 (SVICVVQESK…KVTRIAHGLP (96 aa)) enclose the Toprim domain.

It belongs to the RecR family.

Functionally, may play a role in DNA repair. It seems to be involved in an RecBC-independent recombinational process of DNA repair. It may act with RecF and RecO. This chain is Recombination protein RecR, found in Listeria monocytogenes serotype 4b (strain CLIP80459).